Here is a 944-residue protein sequence, read N- to C-terminus: Neutral alpha-glucosidase AB (944 aa).

Positions 1–32 (MAAVAAVAARRRRSWTGLVLACLGVCLGLTLA) are cleaved as a signal peptide. A disulfide bridge links cysteine 41 with cysteine 47. Residue serine 52 is modified to Phosphoserine. Asparagine 97 is a glycosylation site (N-linked (GlcNAc...) asparagine). A disordered region spans residues 181-225 (QRAPRVSQGSKDPAEGDGAQPEEAPGDGDKPEEIQGKAEKDEPGA). The span at 207–225 (DGDKPEEIQGKAEKDEPGA) shows a compositional bias: basic and acidic residues. Substrate-binding residues include aspartate 283 and aspartate 429. Residue aspartate 542 is the Nucleophile of the active site. Arginine 602 is a substrate binding site. Aspartate 618 (proton donor) is an active-site residue. A disulfide bond links cysteine 633 and cysteine 644. A substrate-binding site is contributed by histidine 676.

Belongs to the glycosyl hydrolase 31 family. In terms of assembly, heterodimer of a catalytic alpha subunit (GANAB) and a beta subunit (PRKCSH). Binds glycosylated PTPRC. In terms of processing, contains sialylated polysaccharide chains.

The protein localises to the endoplasmic reticulum. Its subcellular location is the golgi apparatus. It localises to the melanosome. The catalysed reaction is N(4)-(alpha-D-Glc-(1-&gt;3)-alpha-D-Man-(1-&gt;2)-alpha-D-Man-(1-&gt;2)-alpha-D-Man-(1-&gt;3)-[alpha-D-Man-(1-&gt;2)-alpha-D-Man-(1-&gt;3)-[alpha-D-Man-(1-&gt;2)-alpha-D-Man-(1-&gt;6)]-alpha-D-Man-(1-&gt;6)]-beta-D-Man-(1-&gt;4)-beta-D-GlcNAc-(1-&gt;4)-beta-D-GlcNAc)-L-asparaginyl-[protein] + H2O = N(4)-(alpha-D-Man-(1-&gt;2)-alpha-D-Man-(1-&gt;2)-alpha-D-Man-(1-&gt;3)-[alpha-D-Man-(1-&gt;2)-alpha-D-Man-(1-&gt;3)-[alpha-D-Man-(1-&gt;2)-alpha-D-Man-(1-&gt;6)]-alpha-D-Man-(1-&gt;6)]-beta-D-Man-(1-&gt;4)-beta-D-GlcNAc-(1-&gt;4)-beta-D-GlcNAc)-L-asparaginyl-[protein] (N-glucan mannose isomer 9A1,2,3B1,2,3) + beta-D-glucose. The enzyme catalyses N(4)-(alpha-D-Glc-(1-&gt;3)-alpha-D-Glc-(1-&gt;3)-alpha-D-Man-(1-&gt;2)-alpha-D-Man-(1-&gt;2)-alpha-D-Man-(1-&gt;3)-[alpha-D-Man-(1-&gt;2)-alpha-D-Man-(1-&gt;3)-[alpha-D-Man-(1-&gt;2)-alpha-D-Man-(1-&gt;6)]-alpha-D-Man-(1-&gt;6)]-beta-D-Man-(1-&gt;4)-beta-D-GlcNAc-(1-&gt;4)-beta-D-GlcNAc)-L-asparaginyl-[protein] + H2O = N(4)-(alpha-D-Glc-(1-&gt;3)-alpha-D-Man-(1-&gt;2)-alpha-D-Man-(1-&gt;2)-alpha-D-Man-(1-&gt;3)-[alpha-D-Man-(1-&gt;2)-alpha-D-Man-(1-&gt;3)-[alpha-D-Man-(1-&gt;2)-alpha-D-Man-(1-&gt;6)]-alpha-D-Man-(1-&gt;6)]-beta-D-Man-(1-&gt;4)-beta-D-GlcNAc-(1-&gt;4)-beta-D-GlcNAc)-L-asparaginyl-[protein] + beta-D-glucose. It participates in glycan metabolism; N-glycan metabolism. In terms of biological role, catalytic subunit of glucosidase II that cleaves sequentially the 2 innermost alpha-1,3-linked glucose residues from the Glc(2)Man(9)GlcNAc(2) oligosaccharide precursor of immature glycoproteins. Required for PKD1/Polycystin-1 and PKD2/Polycystin-2 maturation and localization to the cell surface and cilia. The protein is Neutral alpha-glucosidase AB (GANAB) of Sus scrofa (Pig).